Reading from the N-terminus, the 756-residue chain is 1-phosphatidylinositol 4,5-bisphosphate phosphodiesterase delta-1 (756 aa).

Positions 21–130 constitute a PH domain; it reads ALLKGSQLLK…WVLGLHKIIH (110 aa). Residues 30–57 are substrate binding; sequence KVKSSSWRRERFYKLQEDCKTIWQESRK. EF-hand domains are found at residues 140-175 and 176-211; these read KLQH…LNIQ and VDDS…LTQR. Ca(2+) contacts are provided by Asp-153, Asn-155, Asp-157, Lys-159, Glu-164, Asp-189, Ser-191, Thr-193, Ser-195, and Glu-200. A glycan (O-linked (GlcNAc) serine) is linked at Ser-191. An O-linked (GlcNAc) threonine glycan is attached at Thr-193. Residues 296-440 form the PI-PLC X-box domain; the sequence is QDMGQPLSHY…LKGKILLKGK (145 aa). Residue His-311 is part of the active site. Residues Asn-312, Glu-341, and Asp-343 each coordinate Ca(2+). His-356 is a catalytic residue. Glu-390 contacts Ca(2+). Residues Lys-438 and Lys-440 each coordinate substrate. At Thr-457 the chain carries Phosphothreonine. Ser-460 is subject to Phosphoserine. Residues 492-609 enclose the PI-PLC Y-box domain; sequence LSDMVIYCKS…GYVLKPAFLR (118 aa). The substrate site is built by Ser-522 and Arg-549. The region spanning 611–737 is the C2 domain; that stretch reads PNGTFNPRAL…QGYRHVHLMS (127 aa). Positions 651, 653, 677, 706, 707, and 708 each coordinate Ca(2+).

In terms of assembly, interacts with TGM2. Ca(2+) serves as cofactor. Strongly expressed in lung, liver and heart. Also expressed at least in pancreas, kidney, skeletal muscle, placenta and brain.

It catalyses the reaction a 1,2-diacyl-sn-glycero-3-phospho-(1D-myo-inositol-4,5-bisphosphate) + H2O = 1D-myo-inositol 1,4,5-trisphosphate + a 1,2-diacyl-sn-glycerol + H(+). The catalysed reaction is a 1,2-diacyl-sn-glycero-3-phospho-(1D-myo-inositol) + H2O = 1D-myo-inositol 1-phosphate + a 1,2-diacyl-sn-glycerol + H(+). The production of the second messenger molecules diacylglycerol (DAG) and inositol 1,4,5-trisphosphate (IP3) is mediated by activated phosphatidylinositol-specific phospholipase C enzymes. Essential for trophoblast and placental development. Binds phosphatidylinositol 4,5-bisphosphate. The protein is 1-phosphatidylinositol 4,5-bisphosphate phosphodiesterase delta-1 of Homo sapiens (Human).